Consider the following 450-residue polypeptide: Phosphoglucosamine mutase (450 aa).

Ser101 (phosphoserine intermediate) is an active-site residue. 4 residues coordinate Mg(2+): Ser101, Asp240, Asp242, and Asp244. Phosphoserine is present on Ser101.

This sequence belongs to the phosphohexose mutase family. Mg(2+) is required as a cofactor. Activated by phosphorylation.

It catalyses the reaction alpha-D-glucosamine 1-phosphate = D-glucosamine 6-phosphate. In terms of biological role, catalyzes the conversion of glucosamine-6-phosphate to glucosamine-1-phosphate. The protein is Phosphoglucosamine mutase of Streptococcus agalactiae serotype Ia (strain ATCC 27591 / A909 / CDC SS700).